Reading from the N-terminus, the 349-residue chain is Cbb3-type cytochrome c oxidase subunit CcoP (349 aa).

The interval 1 to 67 is disordered; the sequence is MADTDDEHAS…RVVRDRKGGR (67 aa). The Cytoplasmic portion of the chain corresponds to 1–96; sequence MADTDDEHAS…NPLPRWWLWT (96 aa). Over residues 16-30 the composition is skewed to basic and acidic residues; it reads NRIELERQAADEAHK. A helical transmembrane segment spans residues 97 to 117; it reads FYATIVWGVLYLIAYPAIPLV. Over 118-349 the chain is Periplasmic; that stretch reads NGATQGLLGQ…AYVHSLGGGE (232 aa). Cytochrome c domains are found at residues 168–258 and 265–346; these read YTAN…LELG and ALAA…HSLG. 8 residues coordinate heme c: C181, C184, H185, M233, C278, C281, H282, and M323.

Belongs to the CcoP / FixP family. In terms of assembly, component of the cbb3-type cytochrome c oxidase at least composed of CcoN, CcoO, CcoQ and CcoP. Heme c serves as cofactor.

It is found in the cell inner membrane. It functions in the pathway energy metabolism; oxidative phosphorylation. Its function is as follows. C-type cytochrome. Part of the cbb3-type cytochrome c oxidase complex. CcoP subunit is required for transferring electrons from donor cytochrome c via its heme groups to CcoO subunit. From there, electrons are shuttled to the catalytic binuclear center of CcoN subunit where oxygen reduction takes place. The complex also functions as a proton pump. The sequence is that of Cbb3-type cytochrome c oxidase subunit CcoP from Paracoccus denitrificans (strain Pd 1222).